A 126-amino-acid polypeptide reads, in one-letter code: Phosphoribosyl-AMP cyclohydrolase (126 aa).

D74 contacts Mg(2+). Zn(2+) is bound at residue C75. Residues D76 and D78 each coordinate Mg(2+). 2 residues coordinate Zn(2+): C92 and C99.

It belongs to the PRA-CH family. Homodimer. Mg(2+) is required as a cofactor. Requires Zn(2+) as cofactor.

It is found in the cytoplasm. It catalyses the reaction 1-(5-phospho-beta-D-ribosyl)-5'-AMP + H2O = 1-(5-phospho-beta-D-ribosyl)-5-[(5-phospho-beta-D-ribosylamino)methylideneamino]imidazole-4-carboxamide. The protein operates within amino-acid biosynthesis; L-histidine biosynthesis; L-histidine from 5-phospho-alpha-D-ribose 1-diphosphate: step 3/9. Catalyzes the hydrolysis of the adenine ring of phosphoribosyl-AMP. The polypeptide is Phosphoribosyl-AMP cyclohydrolase (Geotalea daltonii (strain DSM 22248 / JCM 15807 / FRC-32) (Geobacter daltonii)).